Here is a 232-residue protein sequence, read N- to C-terminus: Ion-translocating oxidoreductase complex subunit E (232 aa).

6 consecutive transmembrane segments (helical) span residues 18-38, 39-59, 69-89, 93-113, 127-147, and 182-202; these read GLVQ…ITNA, LGLG…VSLV, IPVF…LINA, GLYL…IIIG, AAFD…VLGA, and PFLL…LIAL.

The protein belongs to the NqrDE/RnfAE family. The complex is composed of six subunits: RnfA, RnfB, RnfC, RnfD, RnfE and RnfG.

It localises to the cell inner membrane. In terms of biological role, part of a membrane-bound complex that couples electron transfer with translocation of ions across the membrane. In Shewanella sp. (strain W3-18-1), this protein is Ion-translocating oxidoreductase complex subunit E.